The primary structure comprises 1498 residues: DNA-directed RNA polymerase subunit beta' (1498 aa).

The Zn(2+) site is built by cysteine 67, cysteine 69, cysteine 82, and cysteine 85. 3 residues coordinate Mg(2+): aspartate 499, aspartate 501, and aspartate 503. Cysteine 867, cysteine 943, cysteine 950, and cysteine 953 together coordinate Zn(2+).

It belongs to the RNA polymerase beta' chain family. In terms of assembly, the RNAP catalytic core consists of 2 alpha, 1 beta, 1 beta' and 1 omega subunit. When a sigma factor is associated with the core the holoenzyme is formed, which can initiate transcription. Mg(2+) serves as cofactor. The cofactor is Zn(2+).

It carries out the reaction RNA(n) + a ribonucleoside 5'-triphosphate = RNA(n+1) + diphosphate. Its function is as follows. DNA-dependent RNA polymerase catalyzes the transcription of DNA into RNA using the four ribonucleoside triphosphates as substrates. The sequence is that of DNA-directed RNA polymerase subunit beta' from Chlorobium luteolum (strain DSM 273 / BCRC 81028 / 2530) (Pelodictyon luteolum).